A 96-amino-acid chain; its full sequence is Co-chaperonin GroES (96 aa).

Belongs to the GroES chaperonin family. Heptamer of 7 subunits arranged in a ring. Interacts with the chaperonin GroEL.

It localises to the cytoplasm. Together with the chaperonin GroEL, plays an essential role in assisting protein folding. The GroEL-GroES system forms a nano-cage that allows encapsulation of the non-native substrate proteins and provides a physical environment optimized to promote and accelerate protein folding. GroES binds to the apical surface of the GroEL ring, thereby capping the opening of the GroEL channel. This is Co-chaperonin GroES from Wolbachia sp. subsp. Brugia malayi (strain TRS).